The sequence spans 302 residues: Coenzyme PQQ synthesis protein B (302 aa).

The protein belongs to the PqqB family.

It functions in the pathway cofactor biosynthesis; pyrroloquinoline quinone biosynthesis. Its function is as follows. May be involved in the transport of PQQ or its precursor to the periplasm. This chain is Coenzyme PQQ synthesis protein B, found in Azotobacter vinelandii (strain DJ / ATCC BAA-1303).